A 75-amino-acid polypeptide reads, in one-letter code: Cytochrome c oxidase subunit 6C (75 aa).

Residues 1-13 (MASSALAKPQMRG) are Mitochondrial matrix-facing. The helical transmembrane segment at 14 to 54 (LLARRLRIHIVGAFVVSLGVAAFYKYAVAEPRKKAYADFYR) threads the bilayer. The Mitochondrial intermembrane segment spans residues 55–75 (NYDSVKYFEEMRKAGVFQSVK).

The protein belongs to the cytochrome c oxidase subunit 6c family. Component of the cytochrome c oxidase (complex IV, CIV), a multisubunit enzyme composed of 14 subunits. The complex is composed of a catalytic core of 3 subunits MT-CO1, MT-CO2 and MT-CO3, encoded in the mitochondrial DNA, and 11 supernumerary subunits COX4I, COX5A, COX5B, COX6A, COX6B, COX6C, COX7A, COX7B, COX7C, COX8 and NDUFA4, which are encoded in the nuclear genome. The complex exists as a monomer or a dimer and forms supercomplexes (SCs) in the inner mitochondrial membrane with NADH-ubiquinone oxidoreductase (complex I, CI) and ubiquinol-cytochrome c oxidoreductase (cytochrome b-c1 complex, complex III, CIII), resulting in different assemblies (supercomplex SCI(1)III(2)IV(1) and megacomplex MCI(2)III(2)IV(2)).

The protein resides in the mitochondrion inner membrane. It participates in energy metabolism; oxidative phosphorylation. Its function is as follows. Component of the cytochrome c oxidase, the last enzyme in the mitochondrial electron transport chain which drives oxidative phosphorylation. The respiratory chain contains 3 multisubunit complexes succinate dehydrogenase (complex II, CII), ubiquinol-cytochrome c oxidoreductase (cytochrome b-c1 complex, complex III, CIII) and cytochrome c oxidase (complex IV, CIV), that cooperate to transfer electrons derived from NADH and succinate to molecular oxygen, creating an electrochemical gradient over the inner membrane that drives transmembrane transport and the ATP synthase. Cytochrome c oxidase is the component of the respiratory chain that catalyzes the reduction of oxygen to water. Electrons originating from reduced cytochrome c in the intermembrane space (IMS) are transferred via the dinuclear copper A center (CU(A)) of subunit 2 and heme A of subunit 1 to the active site in subunit 1, a binuclear center (BNC) formed by heme A3 and copper B (CU(B)). The BNC reduces molecular oxygen to 2 water molecules using 4 electrons from cytochrome c in the IMS and 4 protons from the mitochondrial matrix. This chain is Cytochrome c oxidase subunit 6C (COX6C), found in Nycticebus coucang (Slow loris).